The following is a 163-amino-acid chain: MTFKTPDLCDEFESELGKTVRVVTPMFQRYGGRTSFSGQIVTLKIFEDNSLVREVFGEDGKGKVLVIDGGGSLRCALVGDQLAILANKNGWEGVVVYGCIRDSGDINGIDIGVRALNTHPQKTLKKGVGDKNVAVTFGGVTFNPGEYLYADEDGVLVSGKALT.

Substrate is bound by residues 79-82 (GDQL) and Arg101. Asp102 is an a divalent metal cation binding site.

The protein belongs to the class II aldolase/RraA-like family. In terms of assembly, homotrimer. A divalent metal cation serves as cofactor.

The catalysed reaction is 4-hydroxy-4-methyl-2-oxoglutarate = 2 pyruvate. It carries out the reaction oxaloacetate + H(+) = pyruvate + CO2. Catalyzes the aldol cleavage of 4-hydroxy-4-methyl-2-oxoglutarate (HMG) into 2 molecules of pyruvate. Also contains a secondary oxaloacetate (OAA) decarboxylase activity due to the common pyruvate enolate transition state formed following C-C bond cleavage in the retro-aldol and decarboxylation reactions. The polypeptide is Putative 4-hydroxy-4-methyl-2-oxoglutarate aldolase (Dechloromonas aromatica (strain RCB)).